The chain runs to 331 residues: PIN2/TERF1-interacting telomerase inhibitor 1 (331 aa).

3 disordered regions span residues 1-28, 156-175, and 197-331; these read MSML…DDSK, AQDG…LTTT, and SKSQ…KVSR. Positions 26–72 constitute a G-patch domain; that stretch reads DSKFGQKMLEKMGWSKGKGLGAQEQGATEHIKVKVKNNHLGLGATNN. Phosphoserine is present on Ser-233. The span at 236–246 shows a compositional bias: basic residues; it reads HKAKRHKKKKR. Residues 247–261 show a composition bias toward basic and acidic residues; sequence VEAERGPAAKKRDQV. The tract at residues 254–328 is telomerase inhibitory domain (TID); that stretch reads AAKKRDQVEL…DSAPVKKKKK (75 aa). A phosphoserine mark is found at Ser-269, Ser-274, and Ser-277. Residues 291–301 carry the TBM motif; the sequence is QDDVPKPRKRR. Positions 297–306 are enriched in basic residues; that stretch reads PRKRRAKKTL.

The protein belongs to the PINX1 family. In terms of assembly, interacts with MCRS1, TERT, TERF1, NCL/nucleolin, and the telomerase RNA.

The protein resides in the nucleus. It is found in the nucleolus. The protein localises to the chromosome. Its subcellular location is the telomere. It localises to the centromere. The protein resides in the kinetochore. Functionally, microtubule-binding protein essential for faithful chromosome segregation. Mediates TRF1 and TERT accumulation in nucleolus and enhances TRF1 binding to telomeres. Inhibits telomerase activity. May inhibit cell proliferation and act as tumor suppressor. The chain is PIN2/TERF1-interacting telomerase inhibitor 1 from Rattus norvegicus (Rat).